A 335-amino-acid polypeptide reads, in one-letter code: Fructokinase-2 (335 aa).

This sequence belongs to the carbohydrate kinase PfkB family. Expressed in roots, at higher levels in stems, and hardly detectable in leaves.

The enzyme catalyses D-fructose + ATP = D-fructose 6-phosphate + ADP + H(+). Its pathway is glycan biosynthesis; starch biosynthesis. Inhibited at high fructose. Functionally, may play an important role in maintaining the flux of carbon towards starch formation. May also be involved in a sugar-sensing pathway. The sequence is that of Fructokinase-2 (FRK2) from Zea mays (Maize).